Consider the following 150-residue polypeptide: Flagellar assembly factor FliW (150 aa).

It belongs to the FliW family. In terms of assembly, interacts with translational regulator CsrA and flagellin(s).

The protein resides in the cytoplasm. Functionally, acts as an anti-CsrA protein, binds CsrA and prevents it from repressing translation of its target genes, one of which is flagellin. Binds to flagellin and participates in the assembly of the flagellum. This Leptospira interrogans serogroup Icterohaemorrhagiae serovar copenhageni (strain Fiocruz L1-130) protein is Flagellar assembly factor FliW.